We begin with the raw amino-acid sequence, 438 residues long: Probable inactive protein kinase 38 (438 aa).

In terms of domain architecture, Protein kinase spans 77–340 (PRFRLALGKG…FTELQPQYFL (264 aa)).

The protein belongs to the protein kinase superfamily. Tyr protein kinase family.

This Equus caballus (Horse) protein is Probable inactive protein kinase 38 (36).